Reading from the N-terminus, the 244-residue chain is NAD(P)H-quinone oxidoreductase subunit K (244 aa).

[4Fe-4S] cluster is bound by residues C51, C52, C116, and C147.

It belongs to the complex I 20 kDa subunit family. In terms of assembly, NDH-1 can be composed of about 15 different subunits; different subcomplexes with different compositions have been identified which probably have different functions. [4Fe-4S] cluster serves as cofactor.

It is found in the cellular thylakoid membrane. The enzyme catalyses a plastoquinone + NADH + (n+1) H(+)(in) = a plastoquinol + NAD(+) + n H(+)(out). It carries out the reaction a plastoquinone + NADPH + (n+1) H(+)(in) = a plastoquinol + NADP(+) + n H(+)(out). Functionally, NDH-1 shuttles electrons from an unknown electron donor, via FMN and iron-sulfur (Fe-S) centers, to quinones in the respiratory and/or the photosynthetic chain. The immediate electron acceptor for the enzyme in this species is believed to be plastoquinone. Couples the redox reaction to proton translocation, and thus conserves the redox energy in a proton gradient. Cyanobacterial NDH-1 also plays a role in inorganic carbon-concentration. The chain is NAD(P)H-quinone oxidoreductase subunit K from Synechococcus sp. (strain JA-2-3B'a(2-13)) (Cyanobacteria bacterium Yellowstone B-Prime).